The following is a 90-amino-acid chain: Small ribosomal subunit protein bS16 (90 aa).

The protein belongs to the bacterial ribosomal protein bS16 family.

The chain is Small ribosomal subunit protein bS16 from Geobacillus kaustophilus (strain HTA426).